Here is a 1161-residue protein sequence, read N- to C-terminus: Lethal(2) giant larvae protein (1161 aa).

The interval 15–86 (DRHRLQKDLF…NNSASELNVQ (72 aa)) is phospho-regulated basic and hydrophobic (PRBH) motif. WD repeat units follow at residues 39–72 (SALA…LYGQ), 82–128 (ELNV…DGKL), 131–167 (VSSL…EPVI), 189–223 (SIRQ…QRAY), 231–263 (SVGL…PEPP), 278–320 (SINR…GHKV), 328–358 (VIDF…AYDL), and 380–464 (TCNY…YNFK). Phosphoserine is present on residues Ser-473 and Ser-484. WD repeat units lie at residues 513–594 (KKIA…SGVL) and 603–664 (TCMA…LRES). A Phosphoserine modification is found at Ser-679. 4 WD repeats span residues 708–778 (VRCL…KEIQ), 787–832 (GISI…LKPI), 837–927 (LTAN…LNAA), and 941–964 (CFTN…ALAT). A phosphoserine mark is found at Ser-808, Ser-869, Ser-876, Ser-887, Ser-889, and Ser-893. Ser-1013 bears the Phosphoserine mark. The tract at residues 1141–1161 (EKTNGDNKIGTPKTAPEESQF) is disordered.

It belongs to the WD repeat L(2)GL family. May form multimeric complexes. Interacts with mahj. Interacts with aPKC; leading to phosphorylation. Interacts with ball. Phosphorylated by aPKC which lowers lipid affinity and promotes dissociation from the cell cortex. In developing oocytes, aPKC-mediated phosphorylation restricts activity to the oocyte posterior and is required for oocyte polarity formation. In terms of tissue distribution, expressed in the epithelial cells of the digestive tract and in gonads.

The protein localises to the cytoplasm. Its subcellular location is the cell cortex. Its function is as follows. Essential for the development of polarized epithelia, for cell polarity associated with asymmetric cell division of neuroblasts during development, and for oocyte polarity formation. Promotes the formation of actin-rich projections at the oocyte cortex and the posterior enrichment of par-1 which is required for oocyte polarization. Regulates the localization of axis-specifying morphogens such as stau and grk. Has an essential role in control of cell proliferation and differentiation during development and could act as a tumor suppressor. In terms of biological role, has an accessory function in control of cell proliferation and differentiation during development. The protein is Lethal(2) giant larvae protein (l(2)gl) of Drosophila melanogaster (Fruit fly).